Here is a 1957-residue protein sequence, read N- to C-terminus: Sporulation-specific protein 15 (1957 aa).

Low complexity-rich tracts occupy residues 1-12 and 19-28; these read MSNQSSSGSNTS and ASSLVSSAAS. The disordered stretch occupies residues 1–102; that stretch reads MSNQSSSGSN…STASSALPLT (102 aa). Over residues 58 to 83 the composition is skewed to basic and acidic residues; sequence SQHEDSSEELKRQEVRGMRRHSDLSI. The segment covering 90–102 has biased composition (polar residues); that stretch reads SEGSTASSALPLT. S105 is modified (phosphoserine). 4 coiled-coil regions span residues 199–785, 804–1235, 1320–1471, and 1481–1723; these read KQSE…FTSL, VNMQ…DLLD, KVVA…SLDD, and EKLG…EQHE.

Belongs to the MPC70 family. As to quaternary structure, monomer.

The protein resides in the cytoplasm. The protein localises to the cytoskeleton. It localises to the microtubule organizing center. Its subcellular location is the spindle pole body. Functionally, has a role in the initiation of spore membrane formation. This is Sporulation-specific protein 15 (spo15) from Schizosaccharomyces pombe (strain 972 / ATCC 24843) (Fission yeast).